The following is a 429-amino-acid chain: MEKLNIAGGDSLNGTVHISGAKNSAVALIPATILANSEVTIEGLPEISDIETLRDLLKEIGGNVHFENGEMVVDPTSMISMPLPNGKVKKLRASYYLMGAMLGRFKQAVIGLPGGCHLGPRPIDQHIKGFEALGAEVTNEQGAIYLRAERLRGARIYLDVVSVGATINIMLAAVLAEGKTIIENAAKEPEIIDVATLLTSMGAKIKGAGTNVIRIDGVKELHGCKHTIIPDRIEAGTFMIAGAAMGKEVIIDNVIPTHLESLTAKLREMGYHIETSDDQLLIVGGQKNLKPVDVKTLVYPGFPTDLQQPMTALLTRAKGTSVVTDTIYSARFKHIDELRRMGANMKVEGRSAIITGPVELQGAKVKASDLRAGACLVVAGLMADGVTEITGLEHIDRGYSSLEKKLEGLGATIWRERMTDEEIEQLQNS.

22 to 23 (KN) contacts phosphoenolpyruvate. UDP-N-acetyl-alpha-D-glucosamine is bound at residue R92. Residue C116 is the Proton donor of the active site. C116 carries the 2-(S-cysteinyl)pyruvic acid O-phosphothioketal modification. UDP-N-acetyl-alpha-D-glucosamine-binding positions include 121–125 (RPIDQ), D305, and I327.

This sequence belongs to the EPSP synthase family. MurA subfamily.

Its subcellular location is the cytoplasm. The catalysed reaction is phosphoenolpyruvate + UDP-N-acetyl-alpha-D-glucosamine = UDP-N-acetyl-3-O-(1-carboxyvinyl)-alpha-D-glucosamine + phosphate. Its pathway is cell wall biogenesis; peptidoglycan biosynthesis. Cell wall formation. Adds enolpyruvyl to UDP-N-acetylglucosamine. This chain is UDP-N-acetylglucosamine 1-carboxyvinyltransferase 2, found in Bacillus subtilis (strain 168).